The following is a 122-amino-acid chain: Large ribosomal subunit protein uL14 (122 aa).

It belongs to the universal ribosomal protein uL14 family. Part of the 50S ribosomal subunit. Forms a cluster with proteins L3 and L19. In the 70S ribosome, L14 and L19 interact and together make contacts with the 16S rRNA in bridges B5 and B8.

Functionally, binds to 23S rRNA. Forms part of two intersubunit bridges in the 70S ribosome. The polypeptide is Large ribosomal subunit protein uL14 (Fervidobacterium nodosum (strain ATCC 35602 / DSM 5306 / Rt17-B1)).